The following is a 197-amino-acid chain: uncharacterized protein (197 aa).

It belongs to the methyltransferase superfamily.

This is an uncharacterized protein from Mycobacterium bovis (strain ATCC BAA-935 / AF2122/97).